Consider the following 173-residue polypeptide: ATP synthase subunit b 1 (173 aa).

A helical membrane pass occupies residues 15–37 (TFWVTVAVLIFLAFFGRKIVGAI).

This sequence belongs to the ATPase B chain family. F-type ATPases have 2 components, F(1) - the catalytic core - and F(0) - the membrane proton channel. F(1) has five subunits: alpha(3), beta(3), gamma(1), delta(1), epsilon(1). F(0) has three main subunits: a(1), b(2) and c(10-14). The alpha and beta chains form an alternating ring which encloses part of the gamma chain. F(1) is attached to F(0) by a central stalk formed by the gamma and epsilon chains, while a peripheral stalk is formed by the delta and b chains.

The protein resides in the cell inner membrane. Functionally, f(1)F(0) ATP synthase produces ATP from ADP in the presence of a proton or sodium gradient. F-type ATPases consist of two structural domains, F(1) containing the extramembraneous catalytic core and F(0) containing the membrane proton channel, linked together by a central stalk and a peripheral stalk. During catalysis, ATP synthesis in the catalytic domain of F(1) is coupled via a rotary mechanism of the central stalk subunits to proton translocation. Component of the F(0) channel, it forms part of the peripheral stalk, linking F(1) to F(0). The chain is ATP synthase subunit b 1 from Acidiphilium cryptum (strain JF-5).